Here is a 30-residue protein sequence, read N- to C-terminus: Hemocyanin subunit 2 (30 aa).

It belongs to the tyrosinase family. Hemocyanin subfamily. In terms of tissue distribution, hemolymph.

It is found in the secreted. Its subcellular location is the extracellular space. Its function is as follows. Hemocyanins are copper-containing oxygen carriers occurring freely dissolved in the hemolymph of many mollusks and arthropods. The polypeptide is Hemocyanin subunit 2 (Homarus americanus (American lobster)).